A 221-amino-acid polypeptide reads, in one-letter code: Ependymin-2 (221 aa).

A signal peptide spans Met-1–Ala-21. Asn-33, Asn-73, and Asn-97 each carry an N-linked (GlcNAc...) asparagine glycan.

This sequence belongs to the ependymin family. In terms of processing, binds calcium through the terminal sialic acids. EPDs are synthesized in the meninx and secreted in the cerebrospinal fluid.

Its subcellular location is the secreted. Functionally, may play a role in neural plasticity. May be involved during axon regeneration. The chain is Ependymin-2 (epd2) from Salmo salar (Atlantic salmon).